The chain runs to 1330 residues: Paired amphipathic helix protein Sin3-like 3 (1330 aa).

PAH domains follow at residues 8–78 and 94–164; these read QKLT…LPKG and KRVE…LPDT. Residues 191 to 246 are compositionally biased toward basic and acidic residues; that stretch reads IITPHPDHDYGTEHIDQDRERPIKKENKEHMRGTNKENEHRDARDFEPHSKKEQFL. Residues 191-281 are disordered; sequence IITPHPDHDY…VPSSSTYDEK (91 aa). The span at 262 to 277 shows a compositional bias: polar residues; the sequence is ISNQSKLSGAVPSSST. Residues 283–351 form the PAH 3 domain; it reads AMKSYSQDLA…DSFIEFLVQC (69 aa). Disordered stretches follow at residues 373–401, 718–775, 789–808, 882–906, and 920–1002; these read GEGK…DRDH, NQNV…GRTS, KNVV…SIER, QEMA…FEED, and SKAN…EAEC. Over residues 383–401 the composition is skewed to basic and acidic residues; sequence DNDRDQEHKRDDGLRDRDH. The span at 723–734 shows a compositional bias: low complexity; that stretch reads SGSSSAGESEGS. Residues 789 to 800 show a composition bias toward basic and acidic residues; that stretch reads KNVVTSDEKPES. Residues 920-932 show a composition bias toward polar residues; the sequence is SKANDSTGNNISG. Basic and acidic residues-rich tracts occupy residues 933 to 949 and 956 to 968; these read DRSR…RAEN and NAAR…RNEY. A compositionally biased stretch (acidic residues) spans 980–989; that stretch reads GGEDPEDDLD. At Ser996 the chain carries Phosphoserine.

Interacts with ERF7 and the histone deacetylase HDA19.

It is found in the nucleus. Its function is as follows. Acts as a transcriptional repressor. Interacts with ERF7 to repress genes in abscisic acid and drought stress responses. The heterodimer represses transcription by tethering SNL3 to DNA. The polypeptide is Paired amphipathic helix protein Sin3-like 3 (SNL3) (Arabidopsis thaliana (Mouse-ear cress)).